Reading from the N-terminus, the 116-residue chain is Ribosome-binding factor A (116 aa).

This sequence belongs to the RbfA family. Monomer. Binds 30S ribosomal subunits, but not 50S ribosomal subunits or 70S ribosomes.

Its subcellular location is the cytoplasm. Its function is as follows. One of several proteins that assist in the late maturation steps of the functional core of the 30S ribosomal subunit. Associates with free 30S ribosomal subunits (but not with 30S subunits that are part of 70S ribosomes or polysomes). Required for efficient processing of 16S rRNA. May interact with the 5'-terminal helix region of 16S rRNA. The polypeptide is Ribosome-binding factor A (Streptococcus pneumoniae (strain Hungary19A-6)).